The sequence spans 693 residues: Subtilisin-like protease SBT4.10 (693 aa).

The N-terminal stretch at 1–25 is a signal peptide; that stretch reads MAKLREASFCALACVLVLFLSFVSA. The propeptide at 26–113 is activation peptide; that stretch reads DTYNRQDKQV…VFPSKKYKLH (88 aa). Residues 35–113 form the Inhibitor I9 domain; it reads VYVVYMGSLP…VFPSKKYKLH (79 aa). The Peptidase S8 domain maps to 117-536; the sequence is SWDFMGLKEG…SGHIDPIAAI (420 aa). Asp-145 (charge relay system) is an active-site residue. Asn-176 carries N-linked (GlcNAc...) asparagine glycosylation. Catalysis depends on His-200, which acts as the Charge relay system. N-linked (GlcNAc...) asparagine glycans are attached at residues Asn-215, Asn-223, Asn-368, Asn-413, and Asn-467. The PA domain occupies 354-396; the sequence is QYPLVYETSVEKCNNESLTTLALSFLTLTPQSNEQIISMFHTL. The Charge relay system role is filled by Ser-475. Residues Asn-559, Asn-603, and Asn-613 are each glycosylated (N-linked (GlcNAc...) asparagine).

The protein belongs to the peptidase S8 family. Post-translationally, the C-terminal propeptide is autocleaved.

It is found in the secreted. This Arabidopsis thaliana (Mouse-ear cress) protein is Subtilisin-like protease SBT4.10.